The chain runs to 315 residues: Probable cell division protein WhiA (315 aa).

Positions 275–309 form a DNA-binding region, H-T-H motif; it reads TLKELGEMVSSGTVSKSGVNHRLRKIDEIADALRR.

The protein belongs to the WhiA family.

Functionally, involved in cell division and chromosome segregation. The polypeptide is Probable cell division protein WhiA (Lysinibacillus sphaericus (strain C3-41)).